The primary structure comprises 314 residues: Olfactory receptor 5B3 (314 aa).

At 1 to 23 (MENKTEVTQFILLGLTNDSELQV) the chain is on the extracellular side. Asparagine 3 and asparagine 17 each carry an N-linked (GlcNAc...) asparagine glycan. The helical transmembrane segment at 24 to 44 (PLFITFPFIYIITLVGNLGII) threads the bilayer. The Cytoplasmic portion of the chain corresponds to 45–52 (VLIFWDSC). A helical transmembrane segment spans residues 53-73 (LHNPMYFFLSNLSLVDFCYSS). Residues 74-97 (AVTPIVMAGFLIEDKVISYNACAA) are Extracellular-facing. The cysteines at positions 95 and 187 are disulfide-linked. The chain crosses the membrane as a helical span at residues 98–118 (QMYIFVAFATVENYLLASMAY). The Cytoplasmic segment spans residues 119–131 (DRYAAVCKPLHYT). The chain crosses the membrane as a helical span at residues 132-152 (TTMTTTVCARLAIGSYLCGFL). The N-linked (GlcNAc...) asparagine glycan is linked to asparagine 153. At 153–194 (NASIHTGDTFSLSFCKSNEVHHFFCDIPAVMVLSCSDRHISE) the chain is on the extracellular side. The helical transmembrane segment at 195–215 (LVLIYVVSFNIFIALLVILIS) threads the bilayer. Topologically, residues 216-235 (YTFIFITILKMHSASVYQKP) are cytoplasmic. A helical transmembrane segment spans residues 236-256 (LSTCASHFIAVGIFYGTIIFM). Residues 257–269 (YLQPSSSHSMDTD) are Extracellular-facing. The chain crosses the membrane as a helical span at residues 270–290 (KMAPVFYTMVIPMLNPLVYSL). Residues 291–314 (RNKEVKSAFKKVVEKAKLSVGWSV) lie on the Cytoplasmic side of the membrane.

The protein belongs to the G-protein coupled receptor 1 family.

It localises to the cell membrane. In terms of biological role, odorant receptor. The protein is Olfactory receptor 5B3 (OR5B3) of Homo sapiens (Human).